Here is a 728-residue protein sequence, read N- to C-terminus: 1,4-alpha-glucan branching enzyme GlgB (728 aa).

Asp405 serves as the catalytic Nucleophile. Glu458 functions as the Proton donor in the catalytic mechanism.

This sequence belongs to the glycosyl hydrolase 13 family. GlgB subfamily. In terms of assembly, monomer.

It catalyses the reaction Transfers a segment of a (1-&gt;4)-alpha-D-glucan chain to a primary hydroxy group in a similar glucan chain.. The protein operates within glycan biosynthesis; glycogen biosynthesis. Its function is as follows. Catalyzes the formation of the alpha-1,6-glucosidic linkages in glycogen by scission of a 1,4-alpha-linked oligosaccharide from growing alpha-1,4-glucan chains and the subsequent attachment of the oligosaccharide to the alpha-1,6 position. In Escherichia coli O157:H7, this protein is 1,4-alpha-glucan branching enzyme GlgB.